A 1400-amino-acid chain; its full sequence is Tiny macrocysts protein C (1400 aa).

The next 8 helical transmembrane spans lie at 59-79, 112-132, 152-172, 196-216, 240-260, 266-286, 296-316, and 320-340; these read ILTI…GFKQ, IFFW…WYVA, FVST…LIGL, ANLS…IVGF, FDVY…LVDF, SIVY…ILPY, SGFY…MGIN, and TATT…IGYF. Disordered regions lie at residues 367–393 and 683–712; these read FNEI…SKVT and ERSG…RGKY. Residues 369–386 show a composition bias toward basic and acidic residues; the sequence is EITKNEKSKTGDSKEKES. 4 helical membrane passes run 726–746, 975–995, 1162–1182, and 1342–1362; these read WLMI…LIVL, TMLY…AVLF, VLAI…TYSV, and VLTS…LLLF.

The protein localises to the membrane. The protein is Tiny macrocysts protein C (tmcC) of Dictyostelium discoideum (Social amoeba).